The following is a 302-amino-acid chain: Haloalkane dehalogenase (302 aa).

The AB hydrolase-1 domain maps to 48–152 (PILLMHGEPS…VVVSNTGLPI (105 aa)). Catalysis depends on Asp-123, which acts as the Nucleophile. Asp-249 serves as the catalytic Proton donor. The active-site Proton acceptor is the His-278.

Belongs to the haloalkane dehalogenase family. Type 1 subfamily. Monomer.

The catalysed reaction is 1-haloalkane + H2O = a halide anion + a primary alcohol + H(+). In terms of biological role, catalyzes hydrolytic cleavage of carbon-halogen bonds in halogenated aliphatic compounds, leading to the formation of the corresponding primary alcohols, halide ions and protons. The protein is Haloalkane dehalogenase of Caulobacter vibrioides (strain ATCC 19089 / CIP 103742 / CB 15) (Caulobacter crescentus).